A 123-amino-acid chain; its full sequence is Small ribosomal subunit protein uS12 (123 aa).

The interval 1–47 (MPTINQLVRKGRKKAEKKQSTPALKGGPQKRGVCTRVYTSTPKKPNS) is disordered. Residue D89 is modified to 3-methylthioaspartic acid.

Belongs to the universal ribosomal protein uS12 family. In terms of assembly, part of the 30S ribosomal subunit. Contacts proteins S8 and S17. May interact with IF1 in the 30S initiation complex.

Its function is as follows. With S4 and S5 plays an important role in translational accuracy. Functionally, interacts with and stabilizes bases of the 16S rRNA that are involved in tRNA selection in the A site and with the mRNA backbone. Located at the interface of the 30S and 50S subunits, it traverses the body of the 30S subunit contacting proteins on the other side and probably holding the rRNA structure together. The combined cluster of proteins S8, S12 and S17 appears to hold together the shoulder and platform of the 30S subunit. The polypeptide is Small ribosomal subunit protein uS12 (Desulforapulum autotrophicum (strain ATCC 43914 / DSM 3382 / VKM B-1955 / HRM2) (Desulfobacterium autotrophicum)).